Here is a 530-residue protein sequence, read N- to C-terminus: Glucocorticoid modulatory element-binding protein 2 (530 aa).

The SAND domain maps to 81–163 (EEGENLEAEI…RKIMDSGELD (83 aa)). Cys110 provides a ligand contact to Zn(2+). DNA contacts are provided by Lys136, Lys140, Lys143, and Arg154. Lys155 participates in a covalent cross-link: Glycyl lysine isopeptide (Lys-Gly) (interchain with G-Cter in SUMO1); alternate. A Glycyl lysine isopeptide (Lys-Gly) (interchain with G-Cter in SUMO2); alternate cross-link involves residue Lys155. Zn(2+) contacts are provided by His167, Cys171, and Cys175. 2 coiled-coil regions span residues 245–270 (LLDEVIQEFQQELEETMKGLQQRVQD) and 304–344 (QMDR…SNVL). Ser373 is subject to Phosphoserine.

Homodimer, and heterodimer of GMEB1 and GMEB2. Interacts with the glucocorticoid receptor (NR3C1). May interact with CREB-binding protein (CBP).

It localises to the nucleus. It is found in the cytoplasm. Functionally, trans-acting factor that binds to glucocorticoid modulatory elements (GME) present in the TAT (tyrosine aminotransferase) promoter and increases sensitivity to low concentrations of glucocorticoids. Also binds to the transferrin receptor promoter. In Mus musculus (Mouse), this protein is Glucocorticoid modulatory element-binding protein 2 (Gmeb2).